Reading from the N-terminus, the 326-residue chain is Beta-ketoacyl-[acyl-carrier-protein] synthase III (326 aa).

Active-site residues include cysteine 111 and histidine 252. The segment at 253-257 is ACP-binding; that stretch reads QANIR. Residue asparagine 282 is part of the active site.

The protein belongs to the thiolase-like superfamily. FabH family. As to quaternary structure, homodimer.

It is found in the plastid. Its subcellular location is the chloroplast. The catalysed reaction is malonyl-[ACP] + acetyl-CoA + H(+) = 3-oxobutanoyl-[ACP] + CO2 + CoA. It participates in lipid metabolism; fatty acid biosynthesis. In terms of biological role, catalyzes the condensation reaction of fatty acid synthesis by the addition to an acyl acceptor of two carbons from malonyl-ACP. Catalyzes the first condensation reaction which initiates fatty acid synthesis and may therefore play a role in governing the total rate of fatty acid production. Possesses both acetoacetyl-ACP synthase and acetyl transacylase activities. Its substrate specificity determines the biosynthesis of branched-chain and/or straight-chain of fatty acids. This is Beta-ketoacyl-[acyl-carrier-protein] synthase III from Porphyra purpurea (Red seaweed).